The sequence spans 513 residues: Ankyrin repeat-containing protein YIL001W (513 aa).

2 ANK repeats span residues 8-37 (KNFE…NVNS) and 41-70 (FDNS…VCDR). BTB domains follow at residues 122–179 (RDIT…KFLY) and 274–360 (PDVQ…DIPW).

This is Ankyrin repeat-containing protein YIL001W from Saccharomyces cerevisiae (strain ATCC 204508 / S288c) (Baker's yeast).